The following is a 179-amino-acid chain: Tetratricopeptide repeat protein 36 (179 aa).

TPR repeat units lie at residues 43–76 (SSQL…CPLN), 77–110 (PSAY…AGPK), and 115–148 (CQAY…GSSF).

It belongs to the TTC36 family.

The sequence is that of Tetratricopeptide repeat protein 36 from Caenorhabditis briggsae.